The chain runs to 308 residues: Elongation factor Ts (308 aa).

The interval 80–83 is involved in Mg(2+) ion dislocation from EF-Tu; that stretch reads TDFV.

The protein belongs to the EF-Ts family.

It localises to the cytoplasm. Associates with the EF-Tu.GDP complex and induces the exchange of GDP to GTP. It remains bound to the aminoacyl-tRNA.EF-Tu.GTP complex up to the GTP hydrolysis stage on the ribosome. In Rhizobium leguminosarum bv. trifolii (strain WSM2304), this protein is Elongation factor Ts.